Consider the following 383-residue polypeptide: MQNPPLIRPDMYNQGSSSMATYNASEKNLNEHPSPQIAQPSTSQKLPYRINPTTTNGDTDISVNSNPIQPPLPNLMHLSGPSDYRSMHQSPIHPSYIIPPHSNERKQSASYNRPQNAHVSIQPSVVFPPKSYSISYAPYQINPPLPNGLPNQSISLNKEYIAEEQLSTLPSRNTSVTTAPPSFQNSADTAKNSADNNDNNDNVTKPVPDKDTQLISSSGKTLRNTRRAAQNRTAQKAFRQRKEKYIKNLEQKSKIFDDLLAENNNFKSLNDSLRNDNNILIAQHEAIRNAITMLRSEYDVLCNENNMLKNENSIIKNEHNMSRNENENLKLENKRFHAEYIRMIEDIENTKRKEQEQRDEIEQLKKKIRSLEEIVGRHSDSAT.

Disordered regions lie at residues 1-64 (MQNP…ISVN), 83-113 (DYRSMHQSPIHPSYIIPPHSNERKQSASYNR), and 168-239 (TLPS…KAFR). Residues 13-64 (NQGSSSMATYNASEKNLNEHPSPQIAQPSTSQKLPYRINPTTTNGDTDISVN) show a composition bias toward polar residues. Positions 88–101 (HQSPIHPSYIIPPH) are enriched in low complexity. Polar residues predominate over residues 168-184 (TLPSRNTSVTTAPPSFQ). Positions 185–206 (NSADTAKNSADNNDNNDNVTKP) are enriched in low complexity. A compositionally biased stretch (polar residues) spans 213–222 (QLISSSGKTL). A bZIP domain is found at 221–284 (TLRNTRRAAQ…NDNNILIAQH (64 aa)). The interval 223–247 (RNTRRAAQNRTAQKAFRQRKEKYIK) is basic motif. The segment covering 227 to 237 (RAAQNRTAQKA) has biased composition (low complexity). The leucine-zipper stretch occupies residues 249–277 (LEQKSKIFDDLLAENNNFKSLNDSLRNDN).

The protein belongs to the bZIP family. YAP subfamily. Homodimer.

The protein resides in the nucleus. Transcription activator involved in the regulation of genes expressed in response to environmental changes and metabolic requirements. According to genome-wide promoter binding and gene expression studies it regulates, among others, genes involved in ribosome biogenesis, protein synthesis, carbohydrate metabolism, and carbohydrate transport. It may also be involved in pleiotropic drug resistance. When overexpressed, it confers resistance to cisplatin, methylmethanosulfonate, and mitomycin C, and increases cellular tolerance to sodium and lithium. The chain is AP-1-like transcription factor YAP6 (YAP6) from Saccharomyces cerevisiae (strain ATCC 204508 / S288c) (Baker's yeast).